The sequence spans 172 residues: Adenine phosphoribosyltransferase (172 aa).

This sequence belongs to the purine/pyrimidine phosphoribosyltransferase family. In terms of assembly, homodimer.

It localises to the cytoplasm. It catalyses the reaction AMP + diphosphate = 5-phospho-alpha-D-ribose 1-diphosphate + adenine. The protein operates within purine metabolism; AMP biosynthesis via salvage pathway; AMP from adenine: step 1/1. In terms of biological role, catalyzes a salvage reaction resulting in the formation of AMP, that is energically less costly than de novo synthesis. The chain is Adenine phosphoribosyltransferase from Prochlorococcus marinus (strain MIT 9303).